The chain runs to 380 residues: Homeobox protein ceh-6 (380 aa).

Residues 1–25 (MLIPSSSSIPSSLSASASDSEPSSL) are compositionally biased toward low complexity. 3 disordered regions span residues 1-31 (MLIPSSSSIPSSLSASASDSEPSSLNGSGIS), 167-190 (SGSVSGAGGPHQPLSDISDDSEQT), and 265-286 (GSPNSTFEKMTGQAGRKRKKRT). Residues 187–261 (SEQTCPDDLE…LLFKWLEEAD (75 aa)) form the POU-specific domain. The homeobox DNA-binding region spans 281–340 (KRKKRTSIEVNVKSRLEFHFQSNQKPNAQEITQVAMELQLEKEVVRVWFCNRRQKEKRIA).

This sequence belongs to the POU transcription factor family. Class-3 subfamily. In terms of assembly, interacts with egl-27, sox-2 and sem-4. Interacts with wdr-5.1. In terms of tissue distribution, expressed in a series of neurons in the ring ganglia, excretory cell, dividing neuroblasts in the ventral cord and rectal cells.

Its subcellular location is the nucleus. Functionally, vital for embryonic development and essential for the proper function of the excretory cell. Required for the transdifferentiation of the Y rectal epithelial cell to the PDA motor neuron during larval development. The polypeptide is Homeobox protein ceh-6 (Caenorhabditis elegans).